A 477-amino-acid chain; its full sequence is Dihydrolipoyl dehydrogenase (477 aa).

FAD-binding positions include 34–49 (EKYKGKEGKTALGGTC), lysine 58, and glycine 122. Cysteine 49 and cysteine 54 are disulfide-bonded. NAD(+) contacts are provided by residues 188–192 (GAGVI), glutamate 211, valine 245, and 276–279 (AVGR). FAD contacts are provided by aspartate 319 and alanine 327. Catalysis depends on histidine 451, which acts as the Proton acceptor.

Belongs to the class-I pyridine nucleotide-disulfide oxidoreductase family. As to quaternary structure, homodimer. FAD serves as cofactor.

Its subcellular location is the cytoplasm. The enzyme catalyses N(6)-[(R)-dihydrolipoyl]-L-lysyl-[protein] + NAD(+) = N(6)-[(R)-lipoyl]-L-lysyl-[protein] + NADH + H(+). Functionally, the pyruvate dehydrogenase complex catalyzes the overall conversion of pyruvate to acetyl-CoA and CO(2). It contains multiple copies of three enzymatic components: pyruvate dehydrogenase (E1), dihydrolipoamide acetyltransferase (E2) and lipoamide dehydrogenase (E3). The chain is Dihydrolipoyl dehydrogenase from Azotobacter vinelandii.